The primary structure comprises 275 residues: NH(3)-dependent NAD(+) synthetase (275 aa).

47 to 54 (GISGGQDS) is a binding site for ATP. Position 53 (aspartate 53) interacts with Mg(2+). Residue arginine 141 participates in deamido-NAD(+) binding. Threonine 161 provides a ligand contact to ATP. Glutamate 166 provides a ligand contact to Mg(2+). Residues lysine 174 and aspartate 181 each contribute to the deamido-NAD(+) site. Residues lysine 190 and threonine 212 each coordinate ATP. 261–262 (HK) provides a ligand contact to deamido-NAD(+).

This sequence belongs to the NAD synthetase family. As to quaternary structure, homodimer.

The enzyme catalyses deamido-NAD(+) + NH4(+) + ATP = AMP + diphosphate + NAD(+) + H(+). The protein operates within cofactor biosynthesis; NAD(+) biosynthesis; NAD(+) from deamido-NAD(+) (ammonia route): step 1/1. Catalyzes the ATP-dependent amidation of deamido-NAD to form NAD. Uses ammonia as a nitrogen source. The sequence is that of NH(3)-dependent NAD(+) synthetase from Latilactobacillus sakei subsp. sakei (strain 23K) (Lactobacillus sakei subsp. sakei).